The chain runs to 92 residues: UPF0250 protein Smlt4048 (92 aa).

This sequence belongs to the UPF0250 family.

This is UPF0250 protein Smlt4048 from Stenotrophomonas maltophilia (strain K279a).